The chain runs to 249 residues: L-fucose operon activator (249 aa).

The HTH deoR-type domain occupies 1-56 (MNYRDELILQWVNQQGKASVIELAQHCDISVETIRRDLNKLANKGLLHRTHGGAVS). The H-T-H motif DNA-binding region spans 18–37 (ASVIELAQHCDISVETIRRD).

Its function is as follows. Transcriptional activator of the fuc operon. In Haemophilus influenzae (strain ATCC 51907 / DSM 11121 / KW20 / Rd), this protein is L-fucose operon activator (fucR).